We begin with the raw amino-acid sequence, 165 residues long: MATKVLPLVELKPLLGPRQRLIGIDLGTKTIGLSLSDVERRIATPLETIRRTKFTKDAERLLALADQFDVAAFVIGLPLNMDGSAGPRVQATEAFVRSLSGLTSRPFCYWDERLSTAAVTRDLIAQDASRAKRAAVVDKLAAAFILQGALDRLAWVHETADKDLP.

The protein belongs to the YqgF nuclease family.

It localises to the cytoplasm. Its function is as follows. Could be a nuclease involved in processing of the 5'-end of pre-16S rRNA. The protein is Putative pre-16S rRNA nuclease of Beijerinckia indica subsp. indica (strain ATCC 9039 / DSM 1715 / NCIMB 8712).